A 243-amino-acid polypeptide reads, in one-letter code: Adenylate dimethylallyltransferase (243 aa).

The enzyme catalyses dimethylallyl diphosphate + AMP = N(6)-(dimethylallyl)adenosine 5'-phosphate + diphosphate. Its function is as follows. Transfers dimethylallyl groups to AMP as part of the biosynthesis of cytokinin phytohormones. This Agrobacterium tumefaciens (strain T37) protein is Adenylate dimethylallyltransferase (tzs).